The sequence spans 424 residues: UPF0761 membrane protein Smal_0716 (424 aa).

Transmembrane regions (helical) follow at residues 48-68 (VFAL…FPVF), 101-121 (SAGQ…LITL), 144-164 (FLVY…SLAV), 181-201 (WLAD…CITL), 216-236 (AVPG…GIGA), and 251-271 (VAFV…VLLG).

This sequence belongs to the UPF0761 family.

It is found in the cell inner membrane. This is UPF0761 membrane protein Smal_0716 from Stenotrophomonas maltophilia (strain R551-3).